The sequence spans 574 residues: Glutamyl-tRNA(Gln) amidotransferase subunit B, mitochondrial (574 aa).

It belongs to the GatB/GatE family. GatB subfamily. In terms of assembly, subunit of the heterotrimeric GatCAB amidotransferase (AdT) complex, composed of A, B and C subunits.

The protein resides in the mitochondrion. The enzyme catalyses L-glutamyl-tRNA(Gln) + L-glutamine + ATP + H2O = L-glutaminyl-tRNA(Gln) + L-glutamate + ADP + phosphate + H(+). Its function is as follows. Allows the formation of correctly charged Gln-tRNA(Gln) through the transamidation of misacylated Glu-tRNA(Gln) in the mitochondria. The reaction takes place in the presence of glutamine and ATP through an activated gamma-phospho-Glu-tRNA(Gln). In Phytophthora infestans (strain T30-4) (Potato late blight agent), this protein is Glutamyl-tRNA(Gln) amidotransferase subunit B, mitochondrial.